Here is a 471-residue protein sequence, read N- to C-terminus: Reticulon-2 (471 aa).

3 disordered regions span residues 1-137 (MGQV…ERPL), 153-181 (SAGSGEDSATSSSTPLENEEPDGLEASEA), and 205-234 (QLSPSSGTPQAHTPSPQRSQDSNSGPDDEP). Over residues 14-25 (APSTASSTPDST) the composition is skewed to low complexity. Positions 32–43 (SDFRELHTAREF) are enriched in basic and acidic residues. S44 bears the Phosphoserine mark. 2 stretches are compositionally biased toward polar residues: residues 100 to 118 (PQQSGLGDSLESIPSLSQS) and 159 to 168 (DSATSSSTPL). Over residues 169–181 (ENEEPDGLEASEA) the composition is skewed to acidic residues. The segment covering 205–229 (QLSPSSGTPQAHTPSPQRSQDSNSG) has biased composition (polar residues). Phosphoserine occurs at positions 226 and 228. The region spanning 272-471 (VADLLYWKDT…SVSGSKAKAE (200 aa)) is the Reticulon domain. Transmembrane regions (helical) follow at residues 295–315 (LLCLLHFSIVSVAAHLALLGL) and 390–410 (LLFYILTFVGAIFNGLTLVIL).

As to quaternary structure, interacts with SPAST. Interacts with BACE1. Interacts (via first transmembrane domain) with ARL6IP5/GTRAP3-18. Interacts (via N-terminus) with SLC1A1/EAAC1; the interaction promotes cell surface expression of SLC1A1. In terms of tissue distribution, detected in skeletal and cardiac muscle (at protein level). Expressed predominantly in neural and muscular tissues.

The protein resides in the endoplasmic reticulum membrane. It is found in the sarcoplasmic reticulum membrane. The protein localises to the cell membrane. It localises to the sarcolemma. Its subcellular location is the T-tubule. The protein resides in the cytoplasm. It is found in the myofibril. The protein localises to the sarcomere. It localises to the z line. Its subcellular location is the cytoskeleton. In terms of biological role, inhibits amyloid precursor protein processing, probably by blocking BACE1 activity. Enhances trafficking of the glutamate transporter SLC1A1/EAAC1 from the endoplasmic reticulum to the cell surface. Plays a role in the translocation of SLC2A4/GLUT4 from intracellular membranes to the cell membrane which facilitates the uptake of glucose into the cell. The sequence is that of Reticulon-2 from Mus musculus (Mouse).